A 1137-amino-acid polypeptide reads, in one-letter code: MSRRFAEYESLDLSRVNEEVLADWMQHRLFEESLKSREGAPSFVFYEGPPSANGMPGIHHVMARAIKDTICRYKTMKGFRVDRKAGWDTHGLPVELGVEKSLGITKEDIGKSISVEEYNAACRRDVMKFTKEWEDLTHKMGYWVDMEHPYITYDNRYIETLWWLLAELYKKGLLYKGYTIQPYSPAAGTGLSTHELNQPGCYRDVKDTTCVAQFKIMDPKPEMQLHGDAFFLAWTTTPWTLPSNTALCVGPEIEYLAVQTFNPYNGIPITVVLGKPLLHTLFNPKGECEEIPASYDPAQKLLPYKVIASWKGKELEGMRYEQLIPWVNPGEGAFRVITGDFVTTEDGTGIVHIAPTFGADDDRVAKKSGVPPLMLRDKEGNMRPMVDLAGRYFPTTDLDPVFVEKHMDLPLYDVYAGRYVKNAYDAGKTEKDETLDVELCVMLKMQNRVFRIEKMTHNYPHCWRTDKPVLYYPLDSWFIRTTACKEEMIANNGKIYWKPESTGTGRFGKWLENLQDWNLSRSRYWGTPLPIWRTEDGSEEICIGSVEELYNEIEKAVKAGMMERNPWAGFKPGVYTEENYAKIDLHRPFVDGITLCSPSGQPMRRELDLIDVWFDSGAMPYAQMHYPFENRERVEDGSVFPADFIAEGVDQTRGWFFTLHAIATMISGTSSFKVVVSNGLVLDKKGNKMSKRLGNAVDPFETIKKYGSDPLRWYMITNSSPWDNLKFDTDGVEEVRRKFFGTLYNTYQFFALYANLDGFTGEEESIPFAKRPEIDRWILSELNTLIREVDDQLSDYEPTRAGRAISDFVSENLSNWYVRLSRRRFWAGDMTEDKLSAYQTLYTSLLTVSKLMAPISPFYADRLYRDLTGKDESVHLALFPRPDQSQVDRALEQSMQMAQQISSMVLALRRRVNLKVRQPLATLMIPAIDDEQRRCIESVQPLILSEVNVKELRFVDDSMGILVKRIKPDFKRLGPRYGKVMKALAEAVTAMTQEEIRSLEKAGTFRMEVAGTPVELELADVEIVSEDIPGWLVANEGNLTVALDITVTDELRSEGLARELVNRVQNIRKQSGFEVSDKVDVLLLSNDIMDKVVAEHHDYIAQQIQAESLEISDAVSDGVELDFDDFVLSIQVVKHQG.

The 'HIGH' region motif lies at 50 to 60 (PSANGMPGIHH). The 'KMSKS' region motif lies at 688–692 (KMSKR). ATP is bound at residue K691.

It belongs to the class-I aminoacyl-tRNA synthetase family. IleS type 2 subfamily. Monomer. Requires Zn(2+) as cofactor.

Its subcellular location is the cytoplasm. It catalyses the reaction tRNA(Ile) + L-isoleucine + ATP = L-isoleucyl-tRNA(Ile) + AMP + diphosphate. In terms of biological role, catalyzes the attachment of isoleucine to tRNA(Ile). As IleRS can inadvertently accommodate and process structurally similar amino acids such as valine, to avoid such errors it has two additional distinct tRNA(Ile)-dependent editing activities. One activity is designated as 'pretransfer' editing and involves the hydrolysis of activated Val-AMP. The other activity is designated 'posttransfer' editing and involves deacylation of mischarged Val-tRNA(Ile). This is Isoleucine--tRNA ligase from Porphyromonas gingivalis (strain ATCC BAA-308 / W83).